A 36-amino-acid chain; its full sequence is AGCKYLFGSCKEDSDCCKHLGCRRKAPQYCGWDGTF.

3 disulfides stabilise this stretch: Cys3–Cys17, Cys10–Cys22, and Cys16–Cys30. Phenylalanine amide is present on Phe36.

Belongs to the neurotoxin 10 (Hwtx-1) family. In terms of tissue distribution, expressed by the venom gland.

Its subcellular location is the secreted. Gating-modifier toxin that targets voltage-gated sodium channels. Inhibits the inactivation of Nav1.7/SCN9A. This is Beta/delta/mu-theraphotoxin-Pv1 from Poecilotheria vittata (Ghost ornamental tarantula).